The chain runs to 185 residues: Peptide deformylase (185 aa).

Residues Cys94 and His136 each contribute to the Fe cation site. Glu137 is a catalytic residue. Residue His140 coordinates Fe cation.

The protein belongs to the polypeptide deformylase family. Fe(2+) is required as a cofactor.

It catalyses the reaction N-terminal N-formyl-L-methionyl-[peptide] + H2O = N-terminal L-methionyl-[peptide] + formate. Removes the formyl group from the N-terminal Met of newly synthesized proteins. Requires at least a dipeptide for an efficient rate of reaction. N-terminal L-methionine is a prerequisite for activity but the enzyme has broad specificity at other positions. The polypeptide is Peptide deformylase (Chlorobium phaeobacteroides (strain BS1)).